The sequence spans 270 residues: Putative hydro-lyase Reut_A2449 (270 aa).

It belongs to the D-glutamate cyclase family.

The polypeptide is Putative hydro-lyase Reut_A2449 (Cupriavidus pinatubonensis (strain JMP 134 / LMG 1197) (Cupriavidus necator (strain JMP 134))).